The chain runs to 266 residues: Nuclease (266 aa).

The first 21 residues, 1–21, serve as a signal peptide directing secretion; the sequence is MRFNNKMLALAALLFAAQASA. Cys-30 and Cys-34 are disulfide-bonded. Residue His-110 is the Proton acceptor of the active site. Asn-140 lines the Mg(2+) pocket. Cys-222 and Cys-264 are oxidised to a cystine.

It belongs to the DNA/RNA non-specific endonuclease family. In terms of assembly, homodimer. Requires Mg(2+) as cofactor.

It localises to the secreted. It carries out the reaction Endonucleolytic cleavage to 5'-phosphomononucleotide and 5'-phosphooligonucleotide end-products.. In terms of biological role, catalyzes the hydrolysis of both DNA and RNA, double- or single-stranded, at the 3'position of the phosphodiester bond to produce 5'-phosphorylated mono-, di-, tri- and tetranucleotides. DNA is a slightly better substrate than RNA. This chain is Nuclease (nucA), found in Serratia marcescens.